The primary structure comprises 301 residues: Homoserine O-acetyltransferase (301 aa).

Cys142 functions as the Acyl-thioester intermediate in the catalytic mechanism. 2 residues coordinate substrate: Lys163 and Ser192. Residue His235 is the Proton acceptor of the active site. Glu237 is an active-site residue. Residue Arg249 participates in substrate binding.

It belongs to the MetA family.

Its subcellular location is the cytoplasm. The catalysed reaction is L-homoserine + acetyl-CoA = O-acetyl-L-homoserine + CoA. The protein operates within amino-acid biosynthesis; L-methionine biosynthesis via de novo pathway; O-acetyl-L-homoserine from L-homoserine: step 1/1. Transfers an acetyl group from acetyl-CoA to L-homoserine, forming acetyl-L-homoserine. This is Homoserine O-acetyltransferase from Bacillus thuringiensis subsp. konkukian (strain 97-27).